The sequence spans 445 residues: Scarecrow-like protein 18 (445 aa).

The segment covering 1–21 (MLTSFKSSSSSSEDATATTTE) has biased composition (low complexity). A disordered region spans residues 1-26 (MLTSFKSSSSSSEDATATTTENPPPL). Residues 32-445 (SAATSASHHL…RPLFSVSSWK (414 aa)) enclose the GRAS domain. The segment at 39-127 (HHLRRLLFTA…STVFTSSVCK (89 aa)) is leucine repeat I (LRI). Positions 146–217 (YLWLNQLTPF…SPPPSLRITG (72 aa)) are VHIID. The short motif at 179–183 (LHILD) is the VHIID element. Residues 227 to 259 (RTGDRLTRFADSLGLQFQFHTLVIVEEDLAGLL) form a leucine repeat II (LRII) region. The segment at 275-366 (IAVNCVHFLH…QRWFGKEILD (92 aa)) is PFYRE. The tract at residues 369-445 (AAEETERKQR…RPLFSVSSWK (77 aa)) is SAW.

It belongs to the GRAS family. As to expression, expressed in roots and flowers.

It is found in the nucleus. Its function is as follows. Probable transcription factor required for axillary (lateral) shoot meristem formation during vegetative development. Seems to act upstream of REVOLUTA. The protein is Scarecrow-like protein 18 (SCL18) of Arabidopsis thaliana (Mouse-ear cress).